The chain runs to 406 residues: Nicotinate phosphoribosyltransferase (406 aa).

Phosphohistidine; by autocatalysis is present on His-225.

The protein belongs to the NAPRTase family. In terms of processing, transiently phosphorylated on a His residue during the reaction cycle. Phosphorylation strongly increases the affinity for substrates and increases the rate of nicotinate D-ribonucleotide production. Dephosphorylation regenerates the low-affinity form of the enzyme, leading to product release.

The enzyme catalyses nicotinate + 5-phospho-alpha-D-ribose 1-diphosphate + ATP + H2O = nicotinate beta-D-ribonucleotide + ADP + phosphate + diphosphate. The protein operates within cofactor biosynthesis; NAD(+) biosynthesis; nicotinate D-ribonucleotide from nicotinate: step 1/1. Functionally, catalyzes the synthesis of beta-nicotinate D-ribonucleotide from nicotinate and 5-phospho-D-ribose 1-phosphate at the expense of ATP. The sequence is that of Nicotinate phosphoribosyltransferase from Psychromonas ingrahamii (strain DSM 17664 / CCUG 51855 / 37).